The primary structure comprises 417 residues: Serine hydroxymethyltransferase (417 aa).

(6S)-5,6,7,8-tetrahydrofolate-binding positions include L121 and 125–127; that span reads GHL. Position 229 is an N6-(pyridoxal phosphate)lysine (K229). A (6S)-5,6,7,8-tetrahydrofolate-binding site is contributed by 355–357; sequence SPF.

The protein belongs to the SHMT family. In terms of assembly, homodimer. The cofactor is pyridoxal 5'-phosphate.

The protein resides in the cytoplasm. The catalysed reaction is (6R)-5,10-methylene-5,6,7,8-tetrahydrofolate + glycine + H2O = (6S)-5,6,7,8-tetrahydrofolate + L-serine. It functions in the pathway one-carbon metabolism; tetrahydrofolate interconversion. The protein operates within amino-acid biosynthesis; glycine biosynthesis; glycine from L-serine: step 1/1. In terms of biological role, catalyzes the reversible interconversion of serine and glycine with tetrahydrofolate (THF) serving as the one-carbon carrier. This reaction serves as the major source of one-carbon groups required for the biosynthesis of purines, thymidylate, methionine, and other important biomolecules. Also exhibits THF-independent aldolase activity toward beta-hydroxyamino acids, producing glycine and aldehydes, via a retro-aldol mechanism. The polypeptide is Serine hydroxymethyltransferase (Shewanella baltica (strain OS223)).